A 177-amino-acid polypeptide reads, in one-letter code: ATP synthase subunit b, chloroplastic (177 aa).

The helical transmembrane segment at 26 to 44 threads the bilayer; the sequence is IINLSIVLFVVIRFLGEAL.

The protein belongs to the ATPase B chain family. As to quaternary structure, F-type ATPases have 2 components, F(1) - the catalytic core - and F(0) - the membrane proton channel. F(1) has five subunits: alpha(3), beta(3), gamma(1), delta(1), epsilon(1). F(0) has four main subunits: a(1), b(1), b'(1) and c(10-14). The alpha and beta chains form an alternating ring which encloses part of the gamma chain. F(1) is attached to F(0) by a central stalk formed by the gamma and epsilon chains, while a peripheral stalk is formed by the delta, b and b' chains.

The protein localises to the plastid. Its subcellular location is the chloroplast thylakoid membrane. Functionally, f(1)F(0) ATP synthase produces ATP from ADP in the presence of a proton or sodium gradient. F-type ATPases consist of two structural domains, F(1) containing the extramembraneous catalytic core and F(0) containing the membrane proton channel, linked together by a central stalk and a peripheral stalk. During catalysis, ATP synthesis in the catalytic domain of F(1) is coupled via a rotary mechanism of the central stalk subunits to proton translocation. In terms of biological role, component of the F(0) channel, it forms part of the peripheral stalk, linking F(1) to F(0). The sequence is that of ATP synthase subunit b, chloroplastic from Bigelowiella natans (Pedinomonas minutissima).